The sequence spans 266 residues: Glucosamine-6-phosphate deaminase (266 aa).

Asp-72 acts as the Proton acceptor; for enolization step in catalysis. Catalysis depends on Asp-141, which acts as the For ring-opening step. Residue His-143 is the Proton acceptor; for ring-opening step of the active site. The For ring-opening step role is filled by Glu-148.

This sequence belongs to the glucosamine/galactosamine-6-phosphate isomerase family. NagB subfamily. In terms of assembly, homohexamer; trimer of disulfide-linked dimers.

It catalyses the reaction alpha-D-glucosamine 6-phosphate + H2O = beta-D-fructose 6-phosphate + NH4(+). It participates in amino-sugar metabolism; N-acetylneuraminate degradation; D-fructose 6-phosphate from N-acetylneuraminate: step 5/5. Allosterically activated by N-acetylglucosamine 6-phosphate (GlcNAc6P). In terms of biological role, catalyzes the reversible isomerization-deamination of glucosamine 6-phosphate (GlcN6P) to form fructose 6-phosphate (Fru6P) and ammonium ion. This is Glucosamine-6-phosphate deaminase from Shigella boydii serotype 18 (strain CDC 3083-94 / BS512).